The chain runs to 316 residues: Glutamyl-Q tRNA(Asp) synthetase (316 aa).

L-glutamate is bound by residues 13 to 17 and Asp49; that span reads RFAPS. A 'HIGH' region motif is present at residues 16–26; it reads PSPSGDLHFGS. Zn(2+) contacts are provided by Cys105, Cys107, Tyr119, and Cys123. 2 residues coordinate L-glutamate: Tyr176 and Arg194. Residues 232 to 236 carry the 'KMSKS' region motif; it reads KLSKQ. Lys235 is an ATP binding site.

This sequence belongs to the class-I aminoacyl-tRNA synthetase family. GluQ subfamily. The cofactor is Zn(2+).

Catalyzes the tRNA-independent activation of glutamate in presence of ATP and the subsequent transfer of glutamate onto a tRNA(Asp). Glutamate is transferred on the 2-amino-5-(4,5-dihydroxy-2-cyclopenten-1-yl) moiety of the queuosine in the wobble position of the QUC anticodon. The polypeptide is Glutamyl-Q tRNA(Asp) synthetase (Photorhabdus laumondii subsp. laumondii (strain DSM 15139 / CIP 105565 / TT01) (Photorhabdus luminescens subsp. laumondii)).